We begin with the raw amino-acid sequence, 179 residues long: Shikimate kinase (179 aa).

22 to 27 (GTGKSS) lines the ATP pocket. Residue Ser-26 coordinates Mg(2+). Substrate is bound by residues Asp-44, Arg-68, and Gly-90. Arg-128 serves as a coordination point for ATP. Residue Arg-147 coordinates substrate.

It belongs to the shikimate kinase family. As to quaternary structure, monomer. It depends on Mg(2+) as a cofactor.

The protein resides in the cytoplasm. The enzyme catalyses shikimate + ATP = 3-phosphoshikimate + ADP + H(+). Its pathway is metabolic intermediate biosynthesis; chorismate biosynthesis; chorismate from D-erythrose 4-phosphate and phosphoenolpyruvate: step 5/7. Functionally, catalyzes the specific phosphorylation of the 3-hydroxyl group of shikimic acid using ATP as a cosubstrate. This is Shikimate kinase from Geobacter metallireducens (strain ATCC 53774 / DSM 7210 / GS-15).